A 102-amino-acid chain; its full sequence is uncharacterized protein (102 aa).

Residues 36–55 traverse the membrane as a helical segment; the sequence is IISLLAIFIKMCLWLWKQFL.

The protein resides in the membrane. This is an uncharacterized protein from Homo sapiens (Human).